Reading from the N-terminus, the 170-residue chain is UPF0316 protein CLK_3798 (170 aa).

The next 2 helical transmembrane spans lie at 1–21 (MLSY…LMTI) and 36–56 (IIGF…LSGI).

This sequence belongs to the UPF0316 family.

The protein resides in the cell membrane. This Clostridium botulinum (strain Loch Maree / Type A3) protein is UPF0316 protein CLK_3798.